The sequence spans 261 residues: MASSKLLSLALFLVLLTHANSATETSFNFPNFHTDDKLILQGDATISSKGQLRLTGVTPNGDPRVDSMGRAFYSDPIQIKDSNNVASFNTNFTFIIRTKNQSISAYGLAFALVRVNSPPQKKQEFLGIFNTNNPEPNARTVAVVFNTFKNRIDFDKNFIKPYVNENCDFHKYNGEKTDVQITYDSSNNDLRVFLHFTVSQVKCSVSATVHLEKEVDEWVSVGFSPTSGLTEDTTETHDVLSWSFSSKFRNKLSNILLNNIL.

The first 21 residues, 1–21 (MASSKLLSLALFLVLLTHANS), serve as a signal peptide directing secretion. N-linked (GlcNAc...) asparagine glycans are attached at residues asparagine 91 and asparagine 100. A disulfide bridge connects residues cysteine 167 and cysteine 203.

This sequence belongs to the leguminous lectin family. As to quaternary structure, monomer.

Functionally, seed storage. This carbohydrate-binding lectin has toxic effects on bean bruchid pests. The polypeptide is Arcelin-5B (ARC5B) (Phaseolus vulgaris (Kidney bean)).